Reading from the N-terminus, the 112-residue chain is M-myrmeciitoxin-Mp1 (112 aa).

The N-terminal stretch at 1–26 is a signal peptide; that stretch reads MKLSCLLLTLTIIFVLTIVHAPNVEA. Positions 27–56 are excised as a propeptide; sequence KDLADPESEAVGFADAFGEADAVGEADPNA. The tract at residues 57–78 is critical for cytotoxic activity; it reads GLGSVFGRLARILGRVIPKVAK. The segment at 93 to 106 is igE-binding determinant; sequence KEAIPMAVEMAKSQ.

This sequence belongs to the formicidae venom precursor-01 superfamily. Ant pilosulin family. Expressed by the venom gland.

Its subcellular location is the secreted. In terms of biological role, has strong cytotoxic and hemolytic activities. Is more potent against mononuclear leukocytes than against granulocytes. The synthesized peptide 57-76 shows a potent and broad spectrum antimicrobial activity against both Gram-positive and Gram-negative bacteria, and also against the fungus C.albicans. Adopts an alpha-helical structure. The sequence is that of M-myrmeciitoxin-Mp1 from Myrmecia pilosula (Jack jumper ant).